Consider the following 109-residue polypeptide: Flagellar hook-basal body complex protein FliE (109 aa).

Residues 1 to 38 (MQAIHNDKSLLSPFSELNTDNRTKREESGSTFKEQKGG) form a disordered region. Residues 19–38 (TDNRTKREESGSTFKEQKGG) show a composition bias toward basic and acidic residues.

It belongs to the FliE family.

It is found in the bacterial flagellum basal body. The sequence is that of Flagellar hook-basal body complex protein FliE from Helicobacter pylori (strain P12).